Here is a 102-residue protein sequence, read N- to C-terminus: UPF0213 protein XCC3072 (102 aa).

One can recognise a GIY-YIG domain in the interval 5-80 (KPWHLYLLLC…KQQPRARKLA (76 aa)).

It belongs to the UPF0213 family.

This is UPF0213 protein XCC3072 from Xanthomonas campestris pv. campestris (strain ATCC 33913 / DSM 3586 / NCPPB 528 / LMG 568 / P 25).